Here is a 453-residue protein sequence, read N- to C-terminus: Polar tube protein 1 (453 aa).

A signal peptide spans 1–22 (MKGISKILSASIMVMKLGNVYS). The disordered stretch occupies residues 61 to 87 (YVPSSPTTSSSTPGTNNDNETSPTTED). Positions 63 to 73 (PSSPTTSSSTP) are enriched in low complexity. The segment covering 74 to 87 (GTNNDNETSPTTED) has biased composition (polar residues). 8 N-linked (GlcNAc...) asparagine glycosylation sites follow: Asn-79, Asn-225, Asn-245, Asn-265, Asn-285, Asn-305, Asn-325, and Asn-344. Repeat copies occupy residues 214–233 (PCLP…GIVY), 234–253 (PCQP…GVIS), 254–273 (PCQP…GIVY), 274–293 (PCQP…GVIS), 294–313 (PCQP…GIVY), and 314–333 (PCQP…GVIS). Positions 214-333 (PCLPTQGGDG…SNQTIPGVIS (120 aa)) are 6 X 20 AA approximate tandem repeats.

In terms of processing, O-mannosylated. O-mannosylation has functional significance for the ability of microsporidia to invade their host cells.

It localises to the spore polar tube. Its function is as follows. Involved in formation of a polar tube through which the infectious agent is passed on to the host cell. This is Polar tube protein 1 (PTP1) from Encephalitozoon hellem (Microsporidian parasite).